Consider the following 586-residue polypeptide: MSNVLDKTNLHELSIAPKISTHDEKLYECTKCGIFFHRDSVESATEINPHENLGEVRAVEDKPNNESIKVDERGTCNFHFIDEHHGKVDGINTEYDASKFKQILENYSKLTEPNQLFECLPSNLRPPSDDEGSDGKSHDPQSNGLGKTDYTVPTIIPPTVLPVLHDLAQQMVKAGHQQELFKTYRDIRRAVLAQSLEKLGVERHSKYDVERMNQDVFEAKIMNWIHYIRISVKLLFAAEKEICHQILDGVEPFRDQSFAEITTISFGMLLSFGYAIAISRRSPEKVFVILDMYEIMIELQPEFELIFGSKPCTEMKEDALNLTKLLAQTVKETIADFEVAIEMDATETVVMDGSVHALTSYVARYVKFLFDYEPTLRQLFQEFNSNDPDTKLKSVMTGIMRALRNNLDGKSRQFEDAALTQLFLMNNVYYIVRNFRREEAKNFLGDDLVQTHRRIVQQHAKQYQTISWNKILQCITVQSSKSGLIKNESIKKTLVKEKFKTFNSQFEELHQRQCQWSVSDVELRESLRLAIAEVLLPAYGSFLKRFGPMIESGKNSQKYIRFTPEDLERMLNDFFQGKNLDVSPKR.

N-linked (GlcNAc...) asparagine glycans are attached at residues asparagine 65 and asparagine 106. The disordered stretch occupies residues 119–149 (CLPSNLRPPSDDEGSDGKSHDPQSNGLGKTD). The helical transmembrane segment at 258-278 (FAEITTISFGMLLSFGYAIAI) threads the bilayer. 2 N-linked (GlcNAc...) asparagine glycosylation sites follow: asparagine 321 and asparagine 487.

The protein belongs to the EXO70 family. In terms of assembly, subunit of the exocyst complex. As to expression, confined to the outer layer of the columella cells in the root tips of young seedlings.

It localises to the membrane. Functionally, component of the exocyst complex involved in the docking of exocytic vesicles with fusion sites on the plasma membrane during regulated or polarized secretion. Involved in PIN4 exocytosis and gravitropic responses in columella cells. By monitoring PIN4 distribution in columella cells, modulates auxin repartition and subsequently regulates the root system architecture (RSA), thus being a component of the auxin-dependent root directional growth (ARD). This is Exocyst complex component EXO70A3 from Arabidopsis thaliana (Mouse-ear cress).